We begin with the raw amino-acid sequence, 298 residues long: Inosose dehydratase (298 aa).

Belongs to the IolE/MocC family. Glutathione is required as a cofactor. The cofactor is Co(2+). Requires Mn(2+) as cofactor.

The enzyme catalyses scyllo-inosose = 3D-3,5/4-trihydroxycyclohexane-1,2-dione + H2O. The protein operates within polyol metabolism; myo-inositol degradation into acetyl-CoA; acetyl-CoA from myo-inositol: step 2/7. Functionally, catalyzes the dehydration of inosose (2-keto-myo-inositol, 2KMI or 2,4,6/3,5-pentahydroxycyclohexanone) to 3D-(3,5/4)-trihydroxycyclohexane-1,2-dione (D-2,3-diketo-4-deoxy-epi-inositol). This Clostridium tetani (strain Massachusetts / E88) protein is Inosose dehydratase.